Consider the following 150-residue polypeptide: Endoribonuclease YbeY (150 aa).

The Zn(2+) site is built by His112, His116, and His122.

The protein belongs to the endoribonuclease YbeY family. The cofactor is Zn(2+).

The protein localises to the cytoplasm. Its function is as follows. Single strand-specific metallo-endoribonuclease involved in late-stage 70S ribosome quality control and in maturation of the 3' terminus of the 16S rRNA. The protein is Endoribonuclease YbeY of Geobacter sulfurreducens (strain ATCC 51573 / DSM 12127 / PCA).